The sequence spans 113 residues: MTFPFSGAAVKRMLVTGVVLPFGLLVAAGQAQADSQWGSGKNLYDKVCGHCHKPEVGVGPVLEGRGLPEAYIKDIVRNGFRAMPAFPASYVDDESLTQVAEYLSSLPAPAAQP.

The first 33 residues, Met-1–Ala-33, serve as a signal peptide directing secretion. The heme c site is built by Cys-48, Cys-51, His-52, and Met-83.

As to quaternary structure, tetramer of two cytochrome subunits and two flavoprotein subunits. Binds 1 heme c group covalently per subunit.

It functions in the pathway aromatic compound metabolism; p-cresol degradation. Functionally, this is the heme-containing component of the p-cresol methylhydroxylase. It accepts electrons from the flavoprotein subunit. The protein is 4-cresol dehydrogenase [hydroxylating] cytochrome c subunit (pchC) of Pseudomonas putida (Arthrobacter siderocapsulatus).